Consider the following 372-residue polypeptide: Aminomethyltransferase (372 aa).

This sequence belongs to the GcvT family. In terms of assembly, the glycine cleavage system is composed of four proteins: P, T, L and H.

It catalyses the reaction N(6)-[(R)-S(8)-aminomethyldihydrolipoyl]-L-lysyl-[protein] + (6S)-5,6,7,8-tetrahydrofolate = N(6)-[(R)-dihydrolipoyl]-L-lysyl-[protein] + (6R)-5,10-methylene-5,6,7,8-tetrahydrofolate + NH4(+). The glycine cleavage system catalyzes the degradation of glycine. In Synechococcus elongatus (strain ATCC 33912 / PCC 7942 / FACHB-805) (Anacystis nidulans R2), this protein is Aminomethyltransferase.